Consider the following 136-residue polypeptide: Large ribosomal subunit protein uL16 (136 aa).

It belongs to the universal ribosomal protein uL16 family. In terms of assembly, part of the 50S ribosomal subunit.

Functionally, binds 23S rRNA and is also seen to make contacts with the A and possibly P site tRNAs. The protein is Large ribosomal subunit protein uL16 of Orientia tsutsugamushi (strain Boryong) (Rickettsia tsutsugamushi).